The primary structure comprises 321 residues: Probable arabinan endo-1,5-alpha-L-arabinosidase C (321 aa).

The signal sequence occupies residues 1–18 (MYLYTLILLFLASANVNA). Catalysis depends on Asp33, which acts as the Proton acceptor. Asn192 is a glycosylation site (N-linked (GlcNAc...) asparagine). Glu200 acts as the Proton donor in catalysis. N-linked (GlcNAc...) asparagine glycosylation is present at Asn224.

It belongs to the glycosyl hydrolase 43 family.

It localises to the secreted. The catalysed reaction is Endohydrolysis of (1-&gt;5)-alpha-arabinofuranosidic linkages in (1-&gt;5)-arabinans.. The protein operates within glycan metabolism; L-arabinan degradation. Endo-1,5-alpha-L-arabinanase involved in degradation of pectin. Its preferred substrate is linear 1,5-alpha-L-arabinan. The protein is Probable arabinan endo-1,5-alpha-L-arabinosidase C (abnC) of Aspergillus fumigatus (strain CBS 144.89 / FGSC A1163 / CEA10) (Neosartorya fumigata).